The chain runs to 486 residues: Kynurenine 3-monooxygenase (486 aa).

Residues valine 19, 37 to 40, and alanine 57 each bind FAD; that span reads YEAR. Residues arginine 85 and tyrosine 99 each contribute to the L-kynurenine site. FAD contacts are provided by residues arginine 111, leucine 136, threonine 172, aspartate 304, and 317–318; that span reads MN. L-kynurenine-binding residues include asparagine 363 and tyrosine 398. Transmembrane regions (helical) follow at residues 385-404 and 425-445; these read FLHAIMPSTFIPLYTMVTFS and GLFFLGSLIAISSTYLLIHYM. Asparagine 465 carries an N-linked (GlcNAc...) asparagine glycan.

It belongs to the aromatic-ring hydroxylase family. KMO subfamily. It depends on FAD as a cofactor. As to expression, highest levels in placenta and liver. Detectable in kidney.

It localises to the mitochondrion outer membrane. The enzyme catalyses L-kynurenine + NADPH + O2 + H(+) = 3-hydroxy-L-kynurenine + NADP(+) + H2O. It functions in the pathway cofactor biosynthesis; NAD(+) biosynthesis; quinolinate from L-kynurenine: step 1/3. Catalyzes the hydroxylation of L-kynurenine (L-Kyn) to form 3-hydroxy-L-kynurenine (L-3OHKyn). Required for synthesis of quinolinic acid, a neurotoxic NMDA receptor antagonist and potential endogenous inhibitor of NMDA receptor signaling in axonal targeting, synaptogenesis and apoptosis during brain development. Quinolinic acid may also affect NMDA receptor signaling in pancreatic beta cells, osteoblasts, myocardial cells, and the gastrointestinal tract. This Homo sapiens (Human) protein is Kynurenine 3-monooxygenase.